The sequence spans 2066 residues: MSRNVPRIEMPESEENEFASLSLFSPSRPPLNSIPDPSQIQKANHLPHFDLVQKLEGTRAQHQRTLGPEKKFEVLEGRAGNSSDSNPKIVNRNGKSRSEPNSAQSTPTRNGARVSLGGGCATGARFLQSFGGRGRIPRGVSIAESVSFAETTPHFELNEDHSFWKDHNVQVLIRLRPLGTMERANQGYGKCLKQESPQTLVWLGHPEARFTFDHVASETISQEKLFRVAGLPMVENCLSGYNSCVFAYGQTGSGKTYTMMGEISEAEGSLGEDCGVTARIFEYLFSRIKMEEEERRDENLKFSCKCSFLEIYNEQITDLLEPSSTNLQLREDLGKGVYVENLVEHNVRTVSDVLKLLLQGATNRKIAATRMNSESSRSHSVFTCTIESLWEKDSLTRSRFARLNLVDLAGSERQKSSGAEGDRLKEAANINKSLSTLGLVIMSLVDLAHGKHRHVPYRDSRLTFLLQDSLGGNSKTMIIANVSPSLCSTNETLSTLKFAQRAKLIQNNAKVNEDASGDVTALQQEIRKLKVQLTSLLKNHDSCGALSDCISSLEESRYSGTCKVAGETRQDKCHCQVKNMNDNMIGALRREKIAESALQKSEAEIERIDCLVRDMEEDAKRIKIMLNLREEKVGEMEFCTSGSLMTKECLIEENKTLKGEIKLLRDSIDKNPELTRSALENTKLREQLQRYQKFYEHGEREALLAEVTGLRDQLLDVLEAKDESFSKHVMKENEMEKEFEDCRNMNSSLIRELDEIQAGLGRYLNFDQIQSNVVASSTRGAEQAETMPTISEIQEEVAISHSKNYDRGALVKTDEGIDRSILQFKLGKLMKDLEEARTLNCKYEKDHKSQLSQQEDIEVVREQVETETARTILELQEEVIALQSEFQRRICNLTEENQSIKDTITARESEIRALNQDWEKATLELTNFIVAGSKSIKNASTQIESIICSFPQVNAWIGDYVEKAAKNCIKKEETILLLQKSLEDARILVAEMNLKLNSLKGATIALNEFQLGGNAATTEEAFNLNNDVDRMSDEVDTLESNFKANQYSILKTERHAEAALAVTKWLSDSRDQHQMMEKVQDQSVKEFGTLSSISASLSAEGNADISLSRDGHLSDATYPKGDELSTSSSDFSNCRWQHDCALNVKCQGVSSSESDAQESNNKITSAALIAKNGSAHSVYCGEGRQSVEKPLTIMMGREETEYKCSKPLSSGVYMGLMQRMDPVRTFFDRFEEVNATMKEADLTICELVKANEKSNSVTEMWLQTHEELISKEKNLMDDLEQVKSILSACEEEKQVLLNQTHTTLADMENSVSLLEEYFQEMKRGVEETVEALFSHARLAGKELLQLISNSRPSLEQIASEFMEREFTMYATYQCHIGKLIDQILDQRKQVITPNLSGQETNQSVKINAIGYNAEDEVTKKQSREEIVTGLENDEVVQSHESLLYENLYLKKELERKEALFEGLLFDFRLLQESASNKRDIKNEMDELFDALCKVQLELELKASQVHELFVHNENLENCSIDLKTALFTSQSDLEQAKQRIQILAEQNDELRALVSDLCKEKAAAEEGLDEQRDLVNRLEKEILHLTTTAEKQLLSAVKSIKENLKKTSDEKDQIVDEICSLNNKLELAYAIADEKEAIAVEAHQESEASKIYAEQKEEEVKILEISVEELERTINILERRVYDMDEEVKRHRTTQDSLETELQALRQRLFRFENFTGTMVTTNESTEEYKSHISRSTGLQGAHSQIQVLQKEVAEQTKEIKQLKEYISEILLHSEAQSSAYQEKYKTLEVMIRDFKLEDSSSSAAETISHKTEKSSTRSRGSSSPFRCIVGLVQQMKLEKDQELTMARVRVEELESLLAVKQKEICTLNTRIAAADSMTHDVIRDLLGVKMDITSYAELIDQHQVQRVVEKAQQHAEEILSKEQEVMNLKRHIDYLFKDRESCMSELNKKDTDVLATQISLDQLQERVQLLSMQNEMLKNDKSNLLRKLAELDRTVHNAQASNHRVPQTTKDTASFKLADTDYTKRLENAQKLLSHANNELAKYRKTSNNHPSTRTQGQSSGTRYR.

Disordered regions lie at residues 1–41 and 59–116; these read MSRN…SQIQ and RAQH…RVSL. A compositionally biased stretch (low complexity) spans 20-33; the sequence is SLSLFSPSRPPLNS. Residues 67–76 are compositionally biased toward basic and acidic residues; that stretch reads GPEKKFEVLE. The span at 99–109 shows a compositional bias: polar residues; that stretch reads EPNSAQSTPTR. Residues 168–505 form the Kinesin motor domain; the sequence is NVQVLIRLRP…LKFAQRAKLI (338 aa). 249 to 256 lines the ATP pocket; the sequence is GQTGSGKT. 3 microtubules-binding regions span residues 375–379, 406–412, and 454–458; these read SSRSH, VDLAGSE, and HVPYR. Coiled coils occupy residues 1521-1618 and 1650-1772; these read DLKT…VDEI and KIYA…EILL. Disordered stretches follow at residues 1803-1823 and 2043-2066; these read SAAE…RGSS and KYRK…TRYR. A coiled-coil region spans residues 1905–2051; sequence VQRVVEKAQQ…AKYRKTSNNH (147 aa). Polar residues predominate over residues 2047–2066; that stretch reads TSNNHPSTRTQGQSSGTRYR.

It belongs to the TRAFAC class myosin-kinesin ATPase superfamily. Kinesin family. KIN-12 subfamily. Interacts with TAN. Interacts with RANGAP1. In terms of tissue distribution, expressed in tissues enriched in dividing cells, such as root meristems, root primordia, and leaf primordia/young leaves.

It localises to the cytoplasm. It is found in the cytoskeleton. The protein localises to the phragmoplast. Its function is as follows. Involved in the spatial control of cytokinesis by a proper phragmoplast guidance. Localizes TAN to the cortical division sites (CDS) during cytokinesis via direct binding. The protein is Kinesin-like protein KIN-12C of Arabidopsis thaliana (Mouse-ear cress).